The primary structure comprises 305 residues: Tyrosine recombinase XerC (305 aa).

The region spanning 1 to 93 is the Core-binding (CB) domain; that stretch reads MVLDGFAAYF…AWRQYCAWLV (93 aa). Residues 114-294 form the Tyr recombinase domain; sequence RVPKALPQEW…DFDHIARLYD (181 aa). Residues arginine 155, lysine 179, histidine 246, arginine 249, and histidine 272 contribute to the active site. Tyrosine 281 functions as the O-(3'-phospho-DNA)-tyrosine intermediate in the catalytic mechanism.

This sequence belongs to the 'phage' integrase family. XerC subfamily. As to quaternary structure, forms a cyclic heterotetrameric complex composed of two molecules of XerC and two molecules of XerD.

The protein localises to the cytoplasm. Site-specific tyrosine recombinase, which acts by catalyzing the cutting and rejoining of the recombining DNA molecules. The XerC-XerD complex is essential to convert dimers of the bacterial chromosome into monomers to permit their segregation at cell division. It also contributes to the segregational stability of plasmids. The polypeptide is Tyrosine recombinase XerC (Neisseria gonorrhoeae (strain ATCC 700825 / FA 1090)).